The following is a 182-amino-acid chain: Inorganic pyrophosphatase (182 aa).

Residues Lys-30, Arg-44, and Tyr-56 each coordinate substrate. The Mg(2+) site is built by Asp-66, Asp-71, and Asp-103. Tyr-142 contributes to the substrate binding site.

This sequence belongs to the PPase family. As to quaternary structure, homohexamer. The cofactor is Mg(2+).

The protein resides in the cytoplasm. The catalysed reaction is diphosphate + H2O = 2 phosphate + H(+). Functionally, catalyzes the hydrolysis of inorganic pyrophosphate (PPi) forming two phosphate ions. The chain is Inorganic pyrophosphatase from Buchnera aphidicola subsp. Acyrthosiphon pisum (strain APS) (Acyrthosiphon pisum symbiotic bacterium).